The sequence spans 613 residues: MPVRQLPEQVINRIAAGEVVERPASVVKELVENAIDAGASRIDIFTDGGGRRKIAITDDGGGMTAADLALAVERHATSKLDDEDLLQIRTLGFRGEALPSIGSVARLSITTRHKSEPHAWGITVDCGDKSQIVPAALNQGTRVEVADLFHATPARLKFLKTDRTEAEAIREVVRRLAMARPDIAFTVAGEERAPVTWAAALPGAPGQLTRLGDILGTDFRSHAIAVRSERDHVAVEGFAAAPALTRANALGQYLFVNGRPVRDKLILGAVRAAYADYLPRDRHPVVALFVTLDPREVDANVHPAKTEVRFRNAGLVRALIIHALKEGLAREGRRTAANDGGATIAAFRPAFTPPRPSAGPMNWDWQRSPSAPIPRHDDVDSMPPAVSSAAFAEPMQAAFDVGGPRADLRLHEQPAAPDMLDRPLGAARTQIHDTYIVSQTRDGLVIVDQHAAHERIVYERLKTSLAAHGVQRQILLIPDIVELDEATVEALLARTDELAAFGLAVESFGPGAVAVRETPSLLGKINAAGLLRDLAEHMEEWGEALPLERRLMHVAATMACHGSVRAGRRLKPEEMNALLRVMEETPNSGQCNHGRPTYVELKLADVEKLFGRR.

Belongs to the DNA mismatch repair MutL/HexB family.

This protein is involved in the repair of mismatches in DNA. It is required for dam-dependent methyl-directed DNA mismatch repair. May act as a 'molecular matchmaker', a protein that promotes the formation of a stable complex between two or more DNA-binding proteins in an ATP-dependent manner without itself being part of a final effector complex. This is DNA mismatch repair protein MutL from Bradyrhizobium sp. (strain ORS 278).